The primary structure comprises 87 residues: Type 3 secretion system needle filament protein (87 aa).

This sequence belongs to the SctF family. As to quaternary structure, the core secretion machinery of the T3SS is composed of approximately 20 different proteins, including cytoplasmic components, a base, an export apparatus and a needle. This subunit polymerizes and forms the helical needle filament. Forms high-order oligomers in vitro. Forms a stable ternary complex with the YscE-YscG chaperone. Interacts directly with YscG but makes very little direct contact with YscE. Interacts with the needle adapter protein YscI/SctI.

It is found in the secreted. Its subcellular location is the cell surface. The secretion and/or polymerization may be controlled by the type III secretion system regulator YopR. Interaction with YscE-YscG chaperone prevents premature polymerization of YscF/SctF in the bacterial cytosol and is required for its stability and efficient secretion. Interaction with the needle adapter protein YscI/SctI is required for YscF/SctF secretion, needle assembly and Yop secretion. The N-terminus varies among bacterial species, not only in amino acid composition but also in the number of amino acids, and may function in manipulating the host response to the advantage of the bacteria. In Y.pestis, the N-terminus can function to decrease cytokine induction, perhaps contributing to a favorable immune environment leading to survival of Y.pestis within the eukaryotic host. In terms of biological role, component of the type III secretion system (T3SS), also called injectisome, which is used to inject bacterial effector proteins into eukaryotic host cells. YscF/SctF forms the external needle filament that protrudes from the bacterial surface. Essential for the calcium-dependent regulation of T3SS and Yop secretion. Required to block Yop secretion in the presence of extracellular calcium. May be the extracellular T3SS component that senses extracellular calcium and/or participates in transmitting the calcium signal to the cytoplasmic compartment where the block in secretion is initiated. Functionally, during infection, can induce innate immune responses. The needle proteins interact with host TLR2 or TLR4, and induce signaling by NF-kappa-B and/or AP-1. This activation is MyD88 dependent and results in increased expression of cytokines, including TNF-alpha, IL-6 and IL-8. Innate immune responses are modulated by the N-terminal region of YscF/SctF. This is Type 3 secretion system needle filament protein from Yersinia pestis.